A 356-amino-acid polypeptide reads, in one-letter code: MSGQEKRLMVMAGGTGGHVFPGLAVAHHLMDQGWQVRWLGTADRMEADLVPKNGIEIDFIRISGLRGKGIKAQLLAPVRIFNAWRQARAIMKRFQPDVVLGMGGYVSGPGGLAAWSLGIPVVLHEQNGIAGLTNKWLAKIAKKVMQAFPGAFPHADVVGNPVRTDVLALPLPGQRLVGRHGPIRVLVVGGSQGARVLNQTMPQVAAKLGDAVTIWHQSGKGGQQTVQQAYAAAGQPQHKVTEFIDDMAAAYAWADVVVCRSGALTVSEIAAAGLPALFVPFQHKDRQQYWNALPLEKAGAAKILEQPEFTVEAVASTLASWDRETLLDMAERARGASIPDATERVAEEVSAVALAR.

UDP-N-acetyl-alpha-D-glucosamine contacts are provided by residues 15–17, Asn127, Arg163, Ser191, Ile244, 263–268, and Gln288; these read TGG and ALTVSE.

Belongs to the glycosyltransferase 28 family. MurG subfamily.

The protein localises to the cell inner membrane. It carries out the reaction di-trans,octa-cis-undecaprenyl diphospho-N-acetyl-alpha-D-muramoyl-L-alanyl-D-glutamyl-meso-2,6-diaminopimeloyl-D-alanyl-D-alanine + UDP-N-acetyl-alpha-D-glucosamine = di-trans,octa-cis-undecaprenyl diphospho-[N-acetyl-alpha-D-glucosaminyl-(1-&gt;4)]-N-acetyl-alpha-D-muramoyl-L-alanyl-D-glutamyl-meso-2,6-diaminopimeloyl-D-alanyl-D-alanine + UDP + H(+). Its pathway is cell wall biogenesis; peptidoglycan biosynthesis. In terms of biological role, cell wall formation. Catalyzes the transfer of a GlcNAc subunit on undecaprenyl-pyrophosphoryl-MurNAc-pentapeptide (lipid intermediate I) to form undecaprenyl-pyrophosphoryl-MurNAc-(pentapeptide)GlcNAc (lipid intermediate II). The sequence is that of UDP-N-acetylglucosamine--N-acetylmuramyl-(pentapeptide) pyrophosphoryl-undecaprenol N-acetylglucosamine transferase from Klebsiella pneumoniae (strain 342).